We begin with the raw amino-acid sequence, 466 residues long: Asparagine--tRNA ligase (466 aa).

The protein belongs to the class-II aminoacyl-tRNA synthetase family. As to quaternary structure, homodimer.

It is found in the cytoplasm. The enzyme catalyses tRNA(Asn) + L-asparagine + ATP = L-asparaginyl-tRNA(Asn) + AMP + diphosphate + H(+). In Idiomarina loihiensis (strain ATCC BAA-735 / DSM 15497 / L2-TR), this protein is Asparagine--tRNA ligase.